Here is a 557-residue protein sequence, read N- to C-terminus: T-complex protein 1 subunit theta-like 2 (557 aa).

Disordered stretches follow at residues 1-33 (MDST…EPHL) and 531-557 (EIWN…GLNN).

This sequence belongs to the TCP-1 chaperonin family.

The protein resides in the cytoplasm. Functionally, possible molecular chaperone; assists the folding of proteins upon ATP hydrolysis. In Homo sapiens (Human), this protein is T-complex protein 1 subunit theta-like 2 (CCT8L2).